The following is a 411-amino-acid chain: Imidazolonepropionase (411 aa).

Residues H75 and H77 each coordinate Fe(3+). Zn(2+) contacts are provided by H75 and H77. 3 residues coordinate 4-imidazolone-5-propanoate: R84, Y147, and H180. Y147 provides a ligand contact to N-formimidoyl-L-glutamate. H245 lines the Fe(3+) pocket. Position 245 (H245) interacts with Zn(2+). 4-imidazolone-5-propanoate is bound at residue Q248. Fe(3+) is bound at residue D320. D320 contributes to the Zn(2+) binding site. The N-formimidoyl-L-glutamate site is built by N322 and G324. T325 contacts 4-imidazolone-5-propanoate.

The protein belongs to the metallo-dependent hydrolases superfamily. HutI family. Zn(2+) serves as cofactor. Requires Fe(3+) as cofactor.

The protein resides in the cytoplasm. The enzyme catalyses 4-imidazolone-5-propanoate + H2O = N-formimidoyl-L-glutamate. The protein operates within amino-acid degradation; L-histidine degradation into L-glutamate; N-formimidoyl-L-glutamate from L-histidine: step 3/3. In terms of biological role, catalyzes the hydrolytic cleavage of the carbon-nitrogen bond in imidazolone-5-propanoate to yield N-formimidoyl-L-glutamate. It is the third step in the universal histidine degradation pathway. This Aeromonas hydrophila subsp. hydrophila (strain ATCC 7966 / DSM 30187 / BCRC 13018 / CCUG 14551 / JCM 1027 / KCTC 2358 / NCIMB 9240 / NCTC 8049) protein is Imidazolonepropionase.